A 236-amino-acid polypeptide reads, in one-letter code: 3-oxoacyl-[acyl-carrier-protein] reductase (236 aa).

The residue at position 1 (Met1) is an N-acetylmethionine. Residues Ser11–Ile14 and Arg34–Asn35 each bind NADP(+). An N6-acetyllysine modification is found at Lys40. Residues Asp56 and Ala83 to Gly85 contribute to the NADP(+) site. An N6-acetyllysine modification is found at Lys96. Substrate is bound at residue Ser134. NADP(+) is bound by residues Tyr147, Lys151, and Ile180–Thr182. Tyr147 acts as the Proton acceptor in catalysis. Residue Lys194 is modified to N6-acetyllysine.

This sequence belongs to the short-chain dehydrogenases/reductases (SDR) family. In terms of assembly, homotetramer (in vitro). Heterotetramer with HSD17B8; contains two molecules each of HSD17B8 and CBR4. Does not form homotetramers when HSD17B8 is coexpressed, only heterotetramers (in vitro).

Its subcellular location is the mitochondrion matrix. The catalysed reaction is a (3R)-hydroxyacyl-[ACP] + NADP(+) = a 3-oxoacyl-[ACP] + NADPH + H(+). It carries out the reaction a quinone + NADPH + H(+) = a quinol + NADP(+). It functions in the pathway lipid metabolism; fatty acid biosynthesis. Functionally, component of the heterotetramer complex KAR (3-ketoacyl-[acyl carrier protein] reductase or 3-ketoacyl-[ACP] reductase) that forms part of the mitochondrial fatty acid synthase (mtFAS). Beta-subunit of the KAR heterotetramer complex, responsible for the 3-ketoacyl-ACP reductase activity of the mtFAS, reduces 3-oxoacyl-[ACP] to (3R)-hydroxyacyl-[ACP] in a NADPH-dependent manner with no chain length preference, thereby participating in mitochondrial fatty acid biosynthesis. The homotetramer has NADPH-dependent quinone reductase activity (in vitro), hence could play a role in protection against cytotoxicity of exogenous quinones. As a heterotetramer, it can also reduce 9,10-phenanthrenequinone, 1,4-benzoquinone and various other o-quinones and p-quinones (in vitro). This is 3-oxoacyl-[acyl-carrier-protein] reductase (Cbr4) from Mus musculus (Mouse).